A 1148-amino-acid chain; its full sequence is Zinc finger CCCH domain-containing protein 18 (1148 aa).

The span at 1–13 (MDTPESPTQSPQS) shows a compositional bias: low complexity. 3 disordered regions span residues 1-315 (MDTP…PMDR), 380-417 (DPFS…LPPP), and 521-1127 (YTET…REEL). 2 stretches are compositionally biased toward basic and acidic residues: residues 53–73 (VPEH…AGRE) and 82–96 (EDYK…DIHQ). Composition is skewed to acidic residues over residues 144–156 (ERGD…EEDE) and 167–176 (ELEEEEDEEE). A compositionally biased stretch (basic and acidic residues) spans 190-202 (DLKDESSVSRDLD). 2 stretches are compositionally biased toward acidic residues: residues 203–214 (EHELDYDEEVPE) and 233–245 (EDGE…DEEE). Basic and acidic residues predominate over residues 261–289 (DNRDTPLRKSEDSREGGRRDSFRDKKKEE). Acidic residues predominate over residues 290 to 306 (DDGEIDEGEIDDDDLEE). The segment covering 388 to 397 (PPGGAAGGGP) has biased composition (gly residues). Residues 530–615 (PDRERERDPR…EKKDEKEKTL (86 aa)) show a composition bias toward basic and acidic residues. A coiled-coil region spans residues 543 to 584 (RERERERERDHRERERRQREREREREREREKDSRRRKDEWDR). Residues 622-631 (NMPPRGPMEP) show a composition bias toward pro residues. Positions 632–646 (PTKKDMLSVTKRPDE) are enriched in basic and acidic residues. Ser666 bears the Phosphoserine mark. Low complexity predominate over residues 677–740 (SGSSVSLSNS…SRSGSFSSSP (64 aa)). 2 stretches are compositionally biased toward pro residues: residues 783 to 800 (KVMP…PPKP) and 807 to 817 (PPNPRPPGRPP). The span at 818–833 (GPREPREPPNMREGRK) shows a compositional bias: basic and acidic residues. Composition is skewed to low complexity over residues 847–875 (VSGS…ASRS), 882–903 (SLSV…SVRS), and 914–925 (ASPVSSASSRSP). Basic and acidic residues-rich tracts occupy residues 933 to 964 (DRGP…KRVD) and 1012 to 1029 (QTDR…KERP). Ser1056 carries the phosphoserine modification. 2 stretches are compositionally biased toward low complexity: residues 1083–1098 (PAKS…SAAK) and 1107–1119 (GSAS…KPSS). Residues 1118–1146 (SSTLSRREELLKQLKAVEDAIARKRAKIP) are a coiled coil.

The protein resides in the nucleus. This Danio rerio (Zebrafish) protein is Zinc finger CCCH domain-containing protein 18 (zc3h18).